The primary structure comprises 136 residues: uncharacterized protein (136 aa).

2 consecutive transmembrane segments (helical) span residues 36–56 (FLLT…IYLI) and 63–83 (FAFA…LFLS).

Its subcellular location is the cell membrane. This is an uncharacterized protein from Mycoplasma pneumoniae (strain ATCC 29342 / M129 / Subtype 1) (Mycoplasmoides pneumoniae).